The chain runs to 529 residues: Bifunctional purine biosynthesis protein PurH (529 aa).

The MGS-like domain occupies Met-1–Val-148.

The protein belongs to the PurH family.

It catalyses the reaction (6R)-10-formyltetrahydrofolate + 5-amino-1-(5-phospho-beta-D-ribosyl)imidazole-4-carboxamide = 5-formamido-1-(5-phospho-D-ribosyl)imidazole-4-carboxamide + (6S)-5,6,7,8-tetrahydrofolate. It carries out the reaction IMP + H2O = 5-formamido-1-(5-phospho-D-ribosyl)imidazole-4-carboxamide. Its pathway is purine metabolism; IMP biosynthesis via de novo pathway; 5-formamido-1-(5-phospho-D-ribosyl)imidazole-4-carboxamide from 5-amino-1-(5-phospho-D-ribosyl)imidazole-4-carboxamide (10-formyl THF route): step 1/1. The protein operates within purine metabolism; IMP biosynthesis via de novo pathway; IMP from 5-formamido-1-(5-phospho-D-ribosyl)imidazole-4-carboxamide: step 1/1. This is Bifunctional purine biosynthesis protein PurH from Salmonella paratyphi B (strain ATCC BAA-1250 / SPB7).